A 224-amino-acid chain; its full sequence is N6-methyladenosine RNA demethylase ALKBH (224 aa).

One can recognise a Fe2OG dioxygenase domain in the interval 93-222 (LAQAAIVNFY…RINLNVRQMR (130 aa)). 3 residues coordinate Fe cation: histidine 111, aspartate 113, and histidine 178. Residue arginine 213 participates in 2-oxoglutarate binding.

Belongs to the alkB family. Requires Fe(2+) as cofactor.

The catalysed reaction is an N(6)-methyladenosine in mRNA + 2-oxoglutarate + O2 = an adenosine in mRNA + formaldehyde + succinate + CO2. In terms of biological role, RNA demethylase that regulates the stability of mRNAs through an m(6)A-dependent manner. M6A is a modification present at internal sites of mRNAs and some non-coding RNAs and plays a role in mRNA stability and processing. Demethylate m6A at position A1935 within the 3'UTR of transcription factor ZAP1 and plays an important role in C.parasitica development and virulence. Target mRNAs are primarily associated with amino-acid biosynthesis, 2-oxocarboxylic acid metabolism, and ABC transporters, as well as alpha-amino acid metabolism, small-molecule biosynthesis, and the sulfite reductase complex (NADPH). The polypeptide is N6-methyladenosine RNA demethylase ALKBH (Cryphonectria parasitica (strain ATCC 38755 / EP155)).